We begin with the raw amino-acid sequence, 451 residues long: Gamma-aminobutyric acid receptor subunit alpha-2 (451 aa).

An N-terminal signal peptide occupies residues 1-28; sequence MKTKLNSSNMQLLLFVFLAWDPARLVLA. Over 29–249 the chain is Extracellular; sequence NIQEDEAKNN…MTAHFHLKRK (221 aa). N-linked (GlcNAc...) asparagine glycosylation is present at Asn-38. Arg-94 contacts 4-aminobutanoate. A glycan (N-linked (GlcNAc...) asparagine) is linked at Asn-138. Thr-157 is a 4-aminobutanoate binding site. A disulfide bridge links Cys-166 with Cys-180. N-linked (GlcNAc...) asparagine glycosylation occurs at Asn-201. A helical membrane pass occupies residues 250-270; the sequence is IGYFVIQTYLPCIMTVILSQV. Topologically, residues 271–280 are cytoplasmic; the sequence is SFWLNRESVP. The chain crosses the membrane as a helical span at residues 281 to 300; that stretch reads ARTVFGVTTVLTMTTLSISA. At 301 to 311 the chain is on the extracellular side; the sequence is RNSLPKVAYAT. The helical transmembrane segment at 312-332 threads the bilayer; it reads AMDWFIAVCYAFVFSALIEFA. The Cytoplasmic portion of the chain corresponds to 333–420; sequence TVNYFTKRGW…FNSVSKIDRM (88 aa). Residues 421–441 form a helical membrane-spanning segment; that stretch reads SRIVFPVLFGTFNLVYWATYL. Topologically, residues 442–451 are extracellular; the sequence is NREPVLGVSP.

Belongs to the ligand-gated ion channel (TC 1.A.9) family. Gamma-aminobutyric acid receptor (TC 1.A.9.5) subfamily. GABRA2 sub-subfamily. Heteropentamer, formed by a combination of alpha (GABRA1-6), beta (GABRB1-3), gamma (GABRG1-3), delta (GABRD), epsilon (GABRE), rho (GABRR1-3), pi (GABRP) and theta (GABRQ) subunits, each subunit exhibiting distinct physiological and pharmacological properties. Interacts with UBQLN1. Interacts with KIF21B. Interacts with LHFPL4. Interacts with SHISA7; interaction leads to the regulation of GABA(A) receptor trafficking, channel deactivation kinetics and pharmacology. Post-translationally, glycosylated.

The protein localises to the postsynaptic cell membrane. It is found in the cell membrane. It localises to the cytoplasmic vesicle membrane. Its subcellular location is the cell projection. The protein resides in the dendrite. The catalysed reaction is chloride(in) = chloride(out). Its activity is regulated as follows. Activated by pentobarbital. Inhibited by the antagonist bicuculline. Functionally, alpha subunit of the heteropentameric ligand-gated chloride channel gated by gamma-aminobutyric acid (GABA), a major inhibitory neurotransmitter in the brain. GABA-gated chloride channels, also named GABA(A) receptors (GABAAR), consist of five subunits arranged around a central pore and contain GABA active binding site(s) located at the alpha and beta subunit interface(s). When activated by GABA, GABAARs selectively allow the flow of chloride anions across the cell membrane down their electrochemical gradient. Chloride influx into the postsynaptic neuron following GABAAR opening decreases the neuron ability to generate a new action potential, thereby reducing nerve transmission. The alpha-2 subunit exhibits synaptogenic activity together with beta-2 and very little to no activity together with beta-3, the gamma-2 subunit being necessary but not sufficient to induce rapid synaptic contacts formation. This chain is Gamma-aminobutyric acid receptor subunit alpha-2 (GABRA2), found in Bos taurus (Bovine).